The primary structure comprises 485 residues: Glutamyl-tRNA(Gln) amidotransferase subunit A (485 aa).

Residues K78 and S153 each act as charge relay system in the active site. Catalysis depends on S177, which acts as the Acyl-ester intermediate.

Belongs to the amidase family. GatA subfamily. In terms of assembly, heterotrimer of A, B and C subunits.

It carries out the reaction L-glutamyl-tRNA(Gln) + L-glutamine + ATP + H2O = L-glutaminyl-tRNA(Gln) + L-glutamate + ADP + phosphate + H(+). Its function is as follows. Allows the formation of correctly charged Gln-tRNA(Gln) through the transamidation of misacylated Glu-tRNA(Gln) in organisms which lack glutaminyl-tRNA synthetase. The reaction takes place in the presence of glutamine and ATP through an activated gamma-phospho-Glu-tRNA(Gln). The sequence is that of Glutamyl-tRNA(Gln) amidotransferase subunit A from Geotalea daltonii (strain DSM 22248 / JCM 15807 / FRC-32) (Geobacter daltonii).